We begin with the raw amino-acid sequence, 663 residues long: Spore germination protein GerIA (663 aa).

Positions 1–13 are enriched in basic residues; sequence MIWNWLRKKKKSN. The tract at residues 1–175 is disordered; the sequence is MIWNWLRKKK…SGGNSIYDFT (175 aa). Positions 47–56 are enriched in basic and acidic residues; it reads KNNEQKDSSQ. 3 stretches are compositionally biased toward low complexity: residues 57-72, 88-101, and 122-150; these read DKQQSAKQGDSSQDKQ, PKQGDSSQDKQQSA, and DKQQSAKQGDSSQDKQQSAKQGDSSQDKQ. The next 5 membrane-spanning stretches (helical) occupy residues 414–434, 451–471, 491–511, 541–561, and 578–598; these read IFVDGSPSVLLTPVSYFDFFI, ILRLIAVLFSICATPLYVAVL, AQVPFPPLIEALFLELAIDLL, AGLTSNILLIIVALSALASFI, and FLAFAEIGGLFGISLGFIFLF.

It belongs to the GerABKA family.

It localises to the cell membrane. Functionally, required for inosine germination. This chain is Spore germination protein GerIA (gerIA), found in Bacillus cereus.